The following is a 411-amino-acid chain: Adenylosuccinate synthetase (411 aa).

GTP is bound by residues 11–17 (GDEGKGK) and 39–41 (GHT). Aspartate 12 acts as the Proton acceptor in catalysis. 2 residues coordinate Mg(2+): aspartate 12 and glycine 39. Residues 12 to 15 (DEGK), 37 to 40 (NAGH), threonine 121, arginine 135, glutamine 215, threonine 230, and arginine 294 each bind IMP. Histidine 40 acts as the Proton donor in catalysis. 290 to 296 (TTTKRPR) contacts substrate. Residues arginine 296, 322-324 (KLD), and 400-402 (STS) contribute to the GTP site.

This sequence belongs to the adenylosuccinate synthetase family. Homodimer. Requires Mg(2+) as cofactor.

The protein resides in the cytoplasm. It catalyses the reaction IMP + L-aspartate + GTP = N(6)-(1,2-dicarboxyethyl)-AMP + GDP + phosphate + 2 H(+). It functions in the pathway purine metabolism; AMP biosynthesis via de novo pathway; AMP from IMP: step 1/2. Plays an important role in the de novo pathway of purine nucleotide biosynthesis. Catalyzes the first committed step in the biosynthesis of AMP from IMP. This chain is Adenylosuccinate synthetase, found in Helicobacter pylori (strain ATCC 700392 / 26695) (Campylobacter pylori).